The sequence spans 442 residues: Histidine--tRNA ligase (442 aa).

The protein belongs to the class-II aminoacyl-tRNA synthetase family. Homodimer.

The protein localises to the cytoplasm. It catalyses the reaction tRNA(His) + L-histidine + ATP = L-histidyl-tRNA(His) + AMP + diphosphate + H(+). In Rhodopirellula baltica (strain DSM 10527 / NCIMB 13988 / SH1), this protein is Histidine--tRNA ligase.